Reading from the N-terminus, the 106-residue chain is Foxo1-corepressor (106 aa).

A disordered region spans residues 1–44 (MGGPTRRHQEEGSAECLGGPSTRAAPGPGLRDFHFTTAGPSKAD). The Nuclear export signal signature appears at 78–87 (IGTLYIRLDL). Position 93 is a phosphothreonine; by PKA (Thr93).

As to quaternary structure, interacts with FOXO1 (via N-terminal domain); the interaction is direct, occurs in a forskolin-independent manner that prevents SIRT1 binding to FOXO1. Interacts with FOXO3. Does not interact with FOXO4. In terms of processing, phosphorylated at Thr-93 by PKA, leading to import into the nucleus. In terms of tissue distribution, expressed in adipocytes. Expressed in brown and white adipose tissue but not in liver. Protein levels in brown and white adipose tissues decrease following fasting (at protein level). Expressed in white and brown adipose tissues. Expressed in adipocytes. Not expressed in liver, skeletal muscle and brain.

It is found in the cytoplasm. It localises to the cytosol. Its subcellular location is the nucleus. Functionally, regulator of adipocytes that acts by repressing FOXO1 transcriptional activity. Acts by promoting acetylation of FOXO1, both by preventing the interaction between FOXO1 and SIRT1 deacetylase, and by mediating acetyltransferase activity in vitro. Regulates insulin sensitivity and energy metabolism. This Mus musculus (Mouse) protein is Foxo1-corepressor (Fcor).